The sequence spans 317 residues: MTDKLTSLRKLTTVVADTGDIAAMKLYQPQDATTNPSLILNAAQIPEYRKLIDEAIAWAREQSDSREQQIVDASDKLAVNIGLEILKLIPGRISTEVDARLSYDSERSVAKAKRLIKLYNEAGISNDRILIKLASTWQGIRAAEQLEKEGINCNLTLLFSFAQARACAEAGVYLISPFVGRILDWYKANSDQKEFAPHEDPGVISVTEIYQYYKQHGYDTVVMGASFRNSGEILELAGCDRLTIAPALLKELSEAQGEVERKLGYAGEIKARPEPLNEAQFYWEHHQDAMATEKLADGIRKFAIDQGKLEKMISDLL.

The Schiff-base intermediate with substrate role is filled by Lys-132.

It belongs to the transaldolase family. Type 1 subfamily. As to quaternary structure, homodimer.

It localises to the cytoplasm. It catalyses the reaction D-sedoheptulose 7-phosphate + D-glyceraldehyde 3-phosphate = D-erythrose 4-phosphate + beta-D-fructose 6-phosphate. It functions in the pathway carbohydrate degradation; pentose phosphate pathway; D-glyceraldehyde 3-phosphate and beta-D-fructose 6-phosphate from D-ribose 5-phosphate and D-xylulose 5-phosphate (non-oxidative stage): step 2/3. Transaldolase is important for the balance of metabolites in the pentose-phosphate pathway. This chain is Transaldolase, found in Photorhabdus laumondii subsp. laumondii (strain DSM 15139 / CIP 105565 / TT01) (Photorhabdus luminescens subsp. laumondii).